A 165-amino-acid chain; its full sequence is Lipoprotein signal peptidase (165 aa).

Helical transmembrane passes span 9–29 (PFLW…LAVV), 65–85 (WQKY…LFFL), and 97–119 (TGYA…HGFV). Catalysis depends on residues D121 and D139. The helical transmembrane segment at 134–154 (VFNIADVAICIGAGLLAIDAF) threads the bilayer.

This sequence belongs to the peptidase A8 family.

The protein localises to the cell inner membrane. It carries out the reaction Release of signal peptides from bacterial membrane prolipoproteins. Hydrolyzes -Xaa-Yaa-Zaa-|-(S,diacylglyceryl)Cys-, in which Xaa is hydrophobic (preferably Leu), and Yaa (Ala or Ser) and Zaa (Gly or Ala) have small, neutral side chains.. It participates in protein modification; lipoprotein biosynthesis (signal peptide cleavage). Functionally, this protein specifically catalyzes the removal of signal peptides from prolipoproteins. This is Lipoprotein signal peptidase from Histophilus somni (strain 129Pt) (Haemophilus somnus).